Here is a 131-residue protein sequence, read N- to C-terminus: DNA-directed RNA polymerase subunit omega (131 aa).

Belongs to the RNA polymerase subunit omega family. In terms of assembly, the RNAP catalytic core consists of 2 alpha, 1 beta, 1 beta' and 1 omega subunit. When a sigma factor is associated with the core the holoenzyme is formed, which can initiate transcription.

It carries out the reaction RNA(n) + a ribonucleoside 5'-triphosphate = RNA(n+1) + diphosphate. Its function is as follows. Promotes RNA polymerase assembly. Latches the N- and C-terminal regions of the beta' subunit thereby facilitating its interaction with the beta and alpha subunits. In Chelativorans sp. (strain BNC1), this protein is DNA-directed RNA polymerase subunit omega.